Consider the following 137-residue polypeptide: Holo-[acyl-carrier-protein] synthase (137 aa).

Mg(2+) contacts are provided by Asp8 and Glu57.

Belongs to the P-Pant transferase superfamily. AcpS family. Requires Mg(2+) as cofactor.

It is found in the cytoplasm. It catalyses the reaction apo-[ACP] + CoA = holo-[ACP] + adenosine 3',5'-bisphosphate + H(+). In terms of biological role, transfers the 4'-phosphopantetheine moiety from coenzyme A to a Ser of acyl-carrier-protein. In Mesorhizobium japonicum (strain LMG 29417 / CECT 9101 / MAFF 303099) (Mesorhizobium loti (strain MAFF 303099)), this protein is Holo-[acyl-carrier-protein] synthase.